The following is a 688-amino-acid chain: Glycine--tRNA ligase beta subunit (688 aa).

Belongs to the class-II aminoacyl-tRNA synthetase family. Tetramer of two alpha and two beta subunits.

It localises to the cytoplasm. It catalyses the reaction tRNA(Gly) + glycine + ATP = glycyl-tRNA(Gly) + AMP + diphosphate. This Aliivibrio fischeri (strain MJ11) (Vibrio fischeri) protein is Glycine--tRNA ligase beta subunit.